A 620-amino-acid chain; its full sequence is Translation initiation factor IF-2 (620 aa).

Residues Lys-126–Lys-295 form the tr-type G domain. Positions Gly-135–Thr-142 are G1. Gly-135–Thr-142 is a GTP binding site. A G2 region spans residues Asn-160–Ser-164. Residues Asp-181–Gly-184 are G3. Residues Asp-181–His-185 and Asn-235–Asp-238 each bind GTP. The tract at residues Asn-235–Asp-238 is G4. A G5 region spans residues Ser-271 to Leu-273.

This sequence belongs to the TRAFAC class translation factor GTPase superfamily. Classic translation factor GTPase family. IF-2 subfamily.

It localises to the cytoplasm. In terms of biological role, one of the essential components for the initiation of protein synthesis. Protects formylmethionyl-tRNA from spontaneous hydrolysis and promotes its binding to the 30S ribosomal subunits. Also involved in the hydrolysis of GTP during the formation of the 70S ribosomal complex. The protein is Translation initiation factor IF-2 of Malacoplasma penetrans (strain HF-2) (Mycoplasma penetrans).